Consider the following 124-residue polypeptide: uncharacterized protein (124 aa).

Positions 1 to 21 (MFLLSLLHFFHPSLIPSLSLS) are cleaved as a signal peptide.

This is an uncharacterized protein from Schizosaccharomyces pombe (strain 972 / ATCC 24843) (Fission yeast).